The chain runs to 191 residues: Repressor Rok (191 aa).

Positions 2-43 (FNEREALRLRLEQLNEAEVKVIREYQIERDKIYAKLRELDRN) form a coiled coil. The span at 75–96 (SYQPQSQQQSVQPQLQSISSLP) shows a compositional bias: low complexity. A disordered region spans residues 75–116 (SYQPQSQQQSVQPQLQSISSLPAGIPDGTTRRRRGTARPGSK). Residues 95-191 (LPAGIPDGTT…EIESAESANE (97 aa)) are DNA-binding.

It localises to the cytoplasm. The protein resides in the nucleoid. In terms of biological role, repressor of comK, the master regulator of competence development. Overexpression seems to be lethal. Represses at least 20 genes that specify membrane-localized and secreted proteins, including some that encode products with antibiotic activity. Binds to many AT-rich sites in the chromosome, many of which are known or thought to derive from horizontal gene transfer; helps keep mobile element ICEBs1 quiescent in the genome. Binds to its own promoter and is thus probably autoregulatory. This chain is Repressor Rok, found in Bacillus subtilis (strain 168).